A 376-amino-acid polypeptide reads, in one-letter code: PqqA peptide cyclase (376 aa).

The region spanning 4–219 (VPPPLSVLLE…VETARRSLGD (216 aa)) is the Radical SAM core domain. C18, C22, and C25 together coordinate [4Fe-4S] cluster.

It belongs to the radical SAM superfamily. PqqE family. As to quaternary structure, interacts with PqqD. The interaction is necessary for activity of PqqE. Requires [4Fe-4S] cluster as cofactor.

It catalyses the reaction [PQQ precursor protein] + S-adenosyl-L-methionine = E-Y cross-linked-[PQQ precursor protein] + 5'-deoxyadenosine + L-methionine + H(+). The protein operates within cofactor biosynthesis; pyrroloquinoline quinone biosynthesis. Catalyzes the cross-linking of a glutamate residue and a tyrosine residue in the PqqA protein as part of the biosynthesis of pyrroloquinoline quinone (PQQ). This chain is PqqA peptide cyclase, found in Xanthomonas campestris pv. campestris (strain B100).